The following is a 213-amino-acid chain: Major fimbrial subunit (213 aa).

Positions 1–20 are cleaved as a signal peptide; it reads MKKTLLGSLILLAFAGNVQA. Cys41 and Cys81 are oxidised to a cystine.

Belongs to the fimbrial protein family.

The protein resides in the fimbrium. Its function is as follows. Mediates adherence to oropharyngeal epithelial cells. Helps the airway colonization process. The chain is Major fimbrial subunit (hifA) from Haemophilus influenzae.